The primary structure comprises 325 residues: Probable isoaspartyl peptidase/L-asparaginase 2 (325 aa).

Catalysis depends on threonine 195, which acts as the Nucleophile. Substrate-binding positions include 223-226 and 245-248; these read RIGD and TGEG.

This sequence belongs to the Ntn-hydrolase family. In terms of assembly, heterotetramer of two alpha and two beta chains arranged as a dimer of alpha/beta heterodimers. Post-translationally, cleaved into an alpha and beta chain by autocatalysis; this activates the enzyme. The N-terminal residue of the beta subunit is responsible for the nucleophile hydrolase activity.

The catalysed reaction is Cleavage of a beta-linked Asp residue from the N-terminus of a polypeptide.. Functionally, acts in asparagine catabolism and also in the final steps of protein degradation via hydrolysis of a range of isoaspartyl dipeptides. The sequence is that of Probable isoaspartyl peptidase/L-asparaginase 2 from Arabidopsis thaliana (Mouse-ear cress).